A 590-amino-acid polypeptide reads, in one-letter code: Glutamine--tRNA ligase (590 aa).

The 'HIGH' region signature appears at 55 to 65 (PEPNGYLHIGH). ATP contacts are provided by residues 56-58 (EPN) and 62-68 (HIGHAKS). D93 and Y238 together coordinate L-glutamine. ATP-binding positions include T257 and 292 to 293 (RL). The 'KMSKS' region motif lies at 299-303 (ITSKR).

This sequence belongs to the class-I aminoacyl-tRNA synthetase family. In terms of assembly, monomer.

The protein resides in the cytoplasm. The enzyme catalyses tRNA(Gln) + L-glutamine + ATP = L-glutaminyl-tRNA(Gln) + AMP + diphosphate. The polypeptide is Glutamine--tRNA ligase (Polynucleobacter necessarius subsp. necessarius (strain STIR1)).